The chain runs to 136 residues: uncharacterized protein (136 aa).

Its subcellular location is the mitochondrion. This is an uncharacterized protein from Arabidopsis thaliana (Mouse-ear cress).